The chain runs to 378 residues: Stimulator of interferon genes protein (378 aa).

The Cytoplasmic portion of the chain corresponds to 1–17 (MPYSNLHPAIPRPRGHR). The interval 1-189 (MPYSNLHPAI…MFNQLHNNML (189 aa)) is mediates interaction with ZDHHC1 and ZDHHC11. A helical membrane pass occupies residues 18-34 (SKYVALIFLVASLMILW). Lys-19 is covalently cross-linked (Glycyl lysine isopeptide (Lys-Gly) (interchain with G-Cter in ubiquitin)). The Lumenal portion of the chain corresponds to 35–44 (VAKDPPNHTL). The helical transmembrane segment at 45-69 (KYLALHLASHELGLLLKNLCCLAEE) threads the bilayer. The Cytoplasmic portion of the chain corresponds to 70-91 (LCHVQSRYQGSYWKAVRACLGC). S-palmitoyl cysteine attachment occurs at residues Cys-88 and Cys-91. The helical transmembrane segment at 92-106 (PIHCMAMILLSSYFY) threads the bilayer. The Lumenal portion of the chain corresponds to 107-115 (FLQNTADIY). The helical transmembrane segment at 116–133 (LSWMFGLLVLYKSLSMLL) threads the bilayer. The Cytoplasmic portion of the chain corresponds to 134–378 (GLQSLTPAEV…QPLPLRTDLI (245 aa)). Residue Lys-150 forms a Glycyl lysine isopeptide (Lys-Gly) (interchain with G-Cter in ubiquitin) linkage. The segment at 152–339 (LNVAHGLAWS…RHIRQEEKEE (188 aa)) is cyclic dinucleotide-binding domain (CBD). Gly-165 serves as a coordination point for 3',3'-c-di-GMP. Tyr-166 lines the 2',3'-cUAMP pocket. Tyr-166 contributes to the 3',3'-cGAMP binding site. A Glycyl lysine isopeptide (Lys-Gly) (interchain with G-Cter in ubiquitin) cross-link involves residue Lys-235. Arg-237 lines the 2',3'-cUAMP pocket. Arg-237 is a binding site for 3',3'-cGAMP. Arg-237 contributes to the 2',3'-cGAMP binding site. Residues 237–240 (RVYS) and Thr-262 contribute to the 3',3'-c-di-GMP site. A Phosphoserine modification is found at Ser-240. Position 262 (Thr-262) interacts with 2',3'-cUAMP. Thr-262 lines the 2',3'-cGAMP pocket. Lys-337 participates in a covalent cross-link: Glycyl lysine isopeptide (Lys-Gly) (interchain with G-Cter in SUMO). The C-terminal tail (CTT) stretch occupies residues 339 to 378 (EVTMNAPMTSVAPPPSVLSQEPRLLISGMDQPLPLRTDLI). Ser-354 is subject to Phosphoserine; by MAP3K7. Phosphoserine; by TBK1 occurs at positions 357 and 365. A pLxIS motif motif is present at residues 362-365 (LLIS).

Belongs to the STING family. Homodimer; forms a homodimer in absence of cyclic nucleotide (c-di-GMP or cGAMP); 'Lys-63'-linked ubiquitination at Lys-150 is required for homodimerization. Homotetramer; in presence of cyclic nucleotide (c-di-GMP or cGAMP), forms tetramers and higher-order oligomers through side-by-side packing. Interacts (when phosphorylated) with IRF3; following activation and phosphorylation on the pLxIS motif by TBK1, recruits IRF3. Interacts with RIGI, MAVS and SSR2. Interacts with RNF5 and TRIM56. Interacts with TBK1; when homodimer, leading to subsequent production of IFN-beta. Interacts with IFIT1 and IFIT2. Interacts with TRIM29; this interaction induces STING1 ubiquitination and subsequent degradation. Associates with the MHC-II complex. Interacts with STEEP1; interaction takes place upon cGAMP-activation and STING1 phosphorylation by MAP3K7/TAK1 and promotes STING1 translocation to COPII vesicles. Interacts with SEC24A, SEC24B and SEC24C; promoting translocation to COPII vesicles. Interacts (when ubiquitinated) with SQSTM1; leading to relocalization to autophagosomes. Interacts with SURF4. Interacts with HNRNPA2B1. Interacts with ZDHHC1; ZDHHC1 constitutively interacts with STING1 and in presence of DNA viruses activates it by promoting its cGAMP-induced oligomerization and the recruitment of downstream signaling components. Interacts with ZDHHC11; in presence of DNA viruses promotes the recruitment of IRF3 to STING1. Interacts with TOMM70. Interacts with IFI204. Interacts with TAB1; promoting recruitment of TAB1 to the endoplasmic reticulum membrane and subsequent activation of MAP3K7/TAK1. Interacts (via transmembrane domain) with TMEM203. Interacts with DDX41. Post-translationally, phosphorylation by TBK1 leads to activation and production of IFN-beta. Following cyclic nucleotide (c-di-GMP or cGAMP)-binding, activation and translocation from the endoplasmic reticulum, STING1 is phosphorylated by TBK1 at Ser-365 in the pLxIS motif. The phosphorylated pLxIS motif constitutes an IRF3-binding motif, leading to recruitment of the transcription factor IRF3 to induce type-I interferons and other cytokines. The phosphorylated pLxIS motif facilitates SENP2 recruitment during late phase of viral infection. Phosphorylated on tyrosine residues upon MHC-II aggregation. Dephosphorylation by PPP6C leads to inactivation and decreased production of IFN-beta. Phosphorylation at Ser-357 is also required to activate IRF3. Phosphorylation at Ser-354 by MAP3K7/TAK1 facilitates its interaction with STEEP1, promoting STING1 translocation to COPII vesicles. In terms of processing, ubiquitinated. Ubiquitinated via 'Lys-63'-linked ubiquitin chains in response to double-stranded DNA treatment, leading to relocalization to autophagosomes and subsequent degradation; this process is dependent on SQSTM1. 'Lys-63'-linked ubiquitination mediated by TRIM56 at Lys-150 promotes homodimerization and recruitment of the antiviral kinase TBK1 and subsequent production of IFN-beta. 'Lys-48'-linked polyubiquitination at Lys-150 occurring after viral infection is mediated by RNF5 and leads to proteasomal degradation. 'Lys-11'-linked polyubiquitination at Lys-150 by RNF26 leads to stabilize STING1: it protects STING1 from RNF5-mediated 'Lys-48'-linked polyubiquitination. 'Lys-33'-linked and 'Lys-48'-linked deubiquitinated by USP20; leading to its stabilization and promotion of innate antiviral response. 'Lys-48'-linked deubiquitinated by USP44; leading to its stabilization and promotion of innate antiviral response. Deubiquitinated by USP13; leading to inhibition of innate antiviral response. 'Lys-63'-linked deubiquitinated by USP49; leading to inhibition of the subsequent recruitment of TBK1 to the signaling complex. 'Lys-63'-linked ubiquitination mediated by RNF39 promotes the activation of the cGAS-STING pathway. MARCHF5-mediated ubiquitination prevents the oxidation-induced polymer formation. Sumoylated at Lys-337 by TRIM38 during the early phase of viral infection, promoting its stability by preventing its relocalization to autophagosomes and subsequent degradation. Desumoylated by SENP2 during the late phase of viral infection. Post-translationally, palmitoylation takes place in the Golgi apparatus and creates a platform for the recruitment of TBK1. Present in spleen and thymus tissue. Also present in dendritic cells (at protein level).

Its subcellular location is the endoplasmic reticulum membrane. It localises to the cytoplasm. The protein resides in the perinuclear region. The protein localises to the endoplasmic reticulum-Golgi intermediate compartment membrane. It is found in the golgi apparatus membrane. Its subcellular location is the cytoplasmic vesicle. It localises to the autophagosome membrane. The protein resides in the mitochondrion outer membrane. The protein localises to the cell membrane. It is found in the lysosome membrane. The enzyme catalyses H(+)(in) = H(+)(out). With respect to regulation, activated by anticancer drug 5,6-dimethylxanthenone 4-acetic acid (DMXAA). Specifically inhibited by nitrofuran derivatives C-178 and C-176, which covalently bind Cys-91 and prevent palmitoylation and subsequent activation od STING1. Functionally, facilitator of innate immune signaling that acts as a sensor of cytosolic DNA from bacteria and viruses and promotes the production of type I interferon (IFN-alpha and IFN-beta). Innate immune response is triggered in response to non-CpG double-stranded DNA from viruses and bacteria delivered to the cytoplasm. Acts by binding cyclic dinucleotides: recognizes and binds cyclic di-GMP (c-di-GMP), a second messenger produced by bacteria, cyclic UMP-AMP (2',3'-cUAMP), and cyclic GMP-AMP (cGAMP), a messenger produced by CGAS in response to DNA virus in the cytosol. Upon binding to c-di-GMP, cUAMP or cGAMP, STING1 oligomerizes, translocates from the endoplasmic reticulum and is phosphorylated by TBK1 on the pLxIS motif, leading to recruitment and subsequent activation of the transcription factor IRF3 to induce expression of type I interferon and exert a potent anti-viral state. Exhibits 2',3' phosphodiester linkage-specific ligand recognition: can bind both 2'-3' linked cGAMP (2'-3'-cGAMP) and 3'-3' linked cGAMP but is preferentially activated by 2'-3' linked cGAMP. The preference for 2'-3'-cGAMP, compared to other linkage isomers is probably due to the ligand itself, whichs adopts an organized free-ligand conformation that resembles the STING1-bound conformation and pays low energy costs in changing into the active conformation. In addition to promote the production of type I interferons, plays a direct role in autophagy. Following cGAMP-binding, STING1 buds from the endoplasmic reticulum into COPII vesicles, which then form the endoplasmic reticulum-Golgi intermediate compartment (ERGIC). The ERGIC serves as the membrane source for WIPI2 recruitment and LC3 lipidation, leading to formation of autophagosomes that target cytosolic DNA or DNA viruses for degradation by the lysosome. Promotes autophagy by acting as a proton channel that directs proton efflux from the Golgi to facilitate MAP1LC3B/LC3B lipidation. The autophagy- and interferon-inducing activities can be uncoupled and autophagy induction is independent of TBK1 phosphorylation. Autophagy is also triggered upon infection by bacteria: following c-di-GMP-binding, which is produced by live Gram-positive bacteria, promotes reticulophagy. May be involved in translocon function, the translocon possibly being able to influence the induction of type I interferons. May be involved in transduction of apoptotic signals via its association with the major histocompatibility complex class II (MHC-II). This Mus musculus (Mouse) protein is Stimulator of interferon genes protein.